A 697-amino-acid chain; its full sequence is uncharacterized protein (697 aa).

The next 5 membrane-spanning stretches (helical) occupy residues 45–65 (LCAVTAIISVVVPFAAGLALL), 86–106 (TVAAGMIAFLIAGLGGFMGVV), 128–148 (VVVSSLIGGFVFGAAMVGMLA), 198–218 (VLLGYFNIGIMIVSLIGWWAL), and 280–300 (HLAIIGANGSGKTTLMLILAG). ABC transporter domains lie at 251–473 (VRLD…QPQH) and 477–696 (LELV…AGGM). ATP contacts are provided by residues 285–292 (GANGSGKT) and 514–521 (GGNGSGKS). The chain crosses the membrane as a helical span at residues 522–542 (TLAWIMAGLTIPTTGACLLDG).

This sequence belongs to the ABC transporter superfamily.

It is found in the cell membrane. This is an uncharacterized protein from Mycobacterium tuberculosis (strain CDC 1551 / Oshkosh).